A 348-amino-acid polypeptide reads, in one-letter code: RNA 3'-terminal phosphate cyclase (348 aa).

ATP contacts are provided by residues Gln-107 and 290-294 (HLADQ). Catalysis depends on His-316, which acts as the Tele-AMP-histidine intermediate.

It belongs to the RNA 3'-terminal cyclase family. Type 1 subfamily.

It localises to the cytoplasm. The catalysed reaction is a 3'-end 3'-phospho-ribonucleotide-RNA + ATP = a 3'-end 2',3'-cyclophospho-ribonucleotide-RNA + AMP + diphosphate. Its function is as follows. Catalyzes the conversion of 3'-phosphate to a 2',3'-cyclic phosphodiester at the end of RNA. The mechanism of action of the enzyme occurs in 3 steps: (A) adenylation of the enzyme by ATP; (B) transfer of adenylate to an RNA-N3'P to produce RNA-N3'PP5'A; (C) and attack of the adjacent 2'-hydroxyl on the 3'-phosphorus in the diester linkage to produce the cyclic end product. The biological role of this enzyme is unknown but it is likely to function in some aspects of cellular RNA processing. This Trichormus variabilis (strain ATCC 29413 / PCC 7937) (Anabaena variabilis) protein is RNA 3'-terminal phosphate cyclase.